The primary structure comprises 316 residues: MTLATIPSPPQGVWYLGPIPIRAYAMCIIAGIIVAIWLTRKRYAARGGNPEIVLDAAIVAVPAGIIGGRIYHVITDNQKYFCDTCNPVDAFKITNGGLGIWGAVILGGLAVAVFFRYKKLPLAPFADAVAPAVILAQGIGRLGNWFNQELYGAETTVPWALEIYYRVDENGKFAPVTGTSTGEVMATVHPTFLYELLWNLLIFALLMWADKRFKLGHGRVFALYVAGYTLGRFWIEQMRVDEATLIGGIRINTIVSAVVFAGAIIVFFLLKKGRETPEEVDPTFAASVAADAVASPDGKPLPKAGEGIDGETPSTR.

3 helical membrane passes run proline 18 to leucine 38, glycine 47 to glycine 67, and asparagine 95 to phenylalanine 115. An a 1,2-diacyl-sn-glycero-3-phospho-(1'-sn-glycerol)-binding site is contributed by arginine 141. 2 helical membrane passes run valine 188–tryptophan 208 and isoleucine 251–lysine 271. Residues alanine 292 to arginine 316 form a disordered region.

It belongs to the Lgt family.

Its subcellular location is the cell membrane. The enzyme catalyses L-cysteinyl-[prolipoprotein] + a 1,2-diacyl-sn-glycero-3-phospho-(1'-sn-glycerol) = an S-1,2-diacyl-sn-glyceryl-L-cysteinyl-[prolipoprotein] + sn-glycerol 1-phosphate + H(+). Its pathway is protein modification; lipoprotein biosynthesis (diacylglyceryl transfer). Its function is as follows. Catalyzes the transfer of the diacylglyceryl group from phosphatidylglycerol to the sulfhydryl group of the N-terminal cysteine of a prolipoprotein, the first step in the formation of mature lipoproteins. This is Phosphatidylglycerol--prolipoprotein diacylglyceryl transferase from Corynebacterium glutamicum (strain ATCC 13032 / DSM 20300 / JCM 1318 / BCRC 11384 / CCUG 27702 / LMG 3730 / NBRC 12168 / NCIMB 10025 / NRRL B-2784 / 534).